The sequence spans 102 residues: Small ribosomal subunit protein uS10 (102 aa).

This sequence belongs to the universal ribosomal protein uS10 family. In terms of assembly, part of the 30S ribosomal subunit.

Functionally, involved in the binding of tRNA to the ribosomes. In Chlorobium phaeobacteroides (strain BS1), this protein is Small ribosomal subunit protein uS10.